We begin with the raw amino-acid sequence, 448 residues long: 3-phosphoshikimate 1-carboxyvinyltransferase (448 aa).

Residues lysine 38, serine 39, and arginine 43 each coordinate 3-phosphoshikimate. Residue lysine 38 participates in phosphoenolpyruvate binding. 2 residues coordinate phosphoenolpyruvate: glycine 111 and arginine 140. Positions 185, 187, 335, and 362 each coordinate 3-phosphoshikimate. Glutamine 187 lines the phosphoenolpyruvate pocket. The active-site Proton acceptor is aspartate 335. The phosphoenolpyruvate site is built by arginine 366 and arginine 408.

It belongs to the EPSP synthase family. Monomer.

The protein localises to the cytoplasm. It catalyses the reaction 3-phosphoshikimate + phosphoenolpyruvate = 5-O-(1-carboxyvinyl)-3-phosphoshikimate + phosphate. Its pathway is metabolic intermediate biosynthesis; chorismate biosynthesis; chorismate from D-erythrose 4-phosphate and phosphoenolpyruvate: step 6/7. Its function is as follows. Catalyzes the transfer of the enolpyruvyl moiety of phosphoenolpyruvate (PEP) to the 5-hydroxyl of shikimate-3-phosphate (S3P) to produce enolpyruvyl shikimate-3-phosphate and inorganic phosphate. The chain is 3-phosphoshikimate 1-carboxyvinyltransferase from Synechococcus elongatus (strain ATCC 33912 / PCC 7942 / FACHB-805) (Anacystis nidulans R2).